The following is a 311-amino-acid chain: Methionyl-tRNA formyltransferase (311 aa).

Residue 110 to 113 (SLLP) coordinates (6S)-5,6,7,8-tetrahydrofolate.

The protein belongs to the Fmt family.

It catalyses the reaction L-methionyl-tRNA(fMet) + (6R)-10-formyltetrahydrofolate = N-formyl-L-methionyl-tRNA(fMet) + (6S)-5,6,7,8-tetrahydrofolate + H(+). In terms of biological role, attaches a formyl group to the free amino group of methionyl-tRNA(fMet). The formyl group appears to play a dual role in the initiator identity of N-formylmethionyl-tRNA by promoting its recognition by IF2 and preventing the misappropriation of this tRNA by the elongation apparatus. The protein is Methionyl-tRNA formyltransferase of Streptococcus pyogenes serotype M2 (strain MGAS10270).